The chain runs to 154 residues: Transcriptional repressor NrdR (154 aa).

A zinc finger spans residues 3 to 34; it reads CPFCRHPDSRVVDSREADEGQAIRRRRSCPEC. One can recognise an ATP-cone domain in the interval 46-136; it reads LAVVKRSGVT…VYRGFSSAED (91 aa).

Belongs to the NrdR family. Zn(2+) serves as cofactor.

In terms of biological role, negatively regulates transcription of bacterial ribonucleotide reductase nrd genes and operons by binding to NrdR-boxes. This Mycobacteroides abscessus (strain ATCC 19977 / DSM 44196 / CCUG 20993 / CIP 104536 / JCM 13569 / NCTC 13031 / TMC 1543 / L948) (Mycobacterium abscessus) protein is Transcriptional repressor NrdR.